The chain runs to 197 residues: Imidazoleglycerol-phosphate dehydratase (197 aa).

The protein belongs to the imidazoleglycerol-phosphate dehydratase family.

The protein localises to the cytoplasm. The enzyme catalyses D-erythro-1-(imidazol-4-yl)glycerol 3-phosphate = 3-(imidazol-4-yl)-2-oxopropyl phosphate + H2O. It functions in the pathway amino-acid biosynthesis; L-histidine biosynthesis; L-histidine from 5-phospho-alpha-D-ribose 1-diphosphate: step 6/9. The protein is Imidazoleglycerol-phosphate dehydratase of Rhodopseudomonas palustris (strain TIE-1).